Reading from the N-terminus, the 149-residue chain is NADH-quinone oxidoreductase subunit A (149 aa).

The next 3 helical transmembrane spans lie at 16–36 (FGIFLIVAIGLCCLMLVGAWF), 68–88 (FYLVAMFFVIFDVEALYLFAW), and 98–118 (LGFIEAAIFILVLLAGLVYLV).

It belongs to the complex I subunit 3 family. In terms of assembly, NDH-1 is composed of 13 different subunits. Subunits NuoA, H, J, K, L, M, N constitute the membrane sector of the complex.

The protein localises to the cell inner membrane. The enzyme catalyses a quinone + NADH + 5 H(+)(in) = a quinol + NAD(+) + 4 H(+)(out). NDH-1 shuttles electrons from NADH, via FMN and iron-sulfur (Fe-S) centers, to quinones in the respiratory chain. The immediate electron acceptor for the enzyme in this species is believed to be ubiquinone. Couples the redox reaction to proton translocation (for every two electrons transferred, four hydrogen ions are translocated across the cytoplasmic membrane), and thus conserves the redox energy in a proton gradient. The polypeptide is NADH-quinone oxidoreductase subunit A (Cronobacter sakazakii (strain ATCC BAA-894) (Enterobacter sakazakii)).